The primary structure comprises 151 residues: Ribosome maturation factor RimP (151 aa).

The protein belongs to the RimP family.

It is found in the cytoplasm. In terms of biological role, required for maturation of 30S ribosomal subunits. The polypeptide is Ribosome maturation factor RimP (Synechocystis sp. (strain ATCC 27184 / PCC 6803 / Kazusa)).